The chain runs to 432 residues: Ribosomal protein uS12 methylthiotransferase RimO (432 aa).

The MTTase N-terminal domain maps to 4–122; it reads NTIDIITLGC…LLADLGKAYK (119 aa). Residues C13, C51, C85, C146, C150, and C153 each contribute to the [4Fe-4S] cluster site. The Radical SAM core domain maps to 132–363; it reads TTPHHYAYLK…MALQQEIAGE (232 aa). The TRAM domain maps to 366-432; that stretch reads QTKIGKEFKV…DDFDLYASIL (67 aa).

It belongs to the methylthiotransferase family. RimO subfamily. Requires [4Fe-4S] cluster as cofactor.

It is found in the cytoplasm. The enzyme catalyses L-aspartate(89)-[ribosomal protein uS12]-hydrogen + (sulfur carrier)-SH + AH2 + 2 S-adenosyl-L-methionine = 3-methylsulfanyl-L-aspartate(89)-[ribosomal protein uS12]-hydrogen + (sulfur carrier)-H + 5'-deoxyadenosine + L-methionine + A + S-adenosyl-L-homocysteine + 2 H(+). Its function is as follows. Catalyzes the methylthiolation of an aspartic acid residue of ribosomal protein uS12. The polypeptide is Ribosomal protein uS12 methylthiotransferase RimO (Phocaeicola vulgatus (strain ATCC 8482 / DSM 1447 / JCM 5826 / CCUG 4940 / NBRC 14291 / NCTC 11154) (Bacteroides vulgatus)).